Reading from the N-terminus, the 141-residue chain is Large ribosomal subunit protein uL11 (141 aa).

The protein belongs to the universal ribosomal protein uL11 family. In terms of assembly, part of the ribosomal stalk of the 50S ribosomal subunit. Interacts with L10 and the large rRNA to form the base of the stalk. L10 forms an elongated spine to which L12 dimers bind in a sequential fashion forming a multimeric L10(L12)X complex. In terms of processing, one or more lysine residues are methylated.

Forms part of the ribosomal stalk which helps the ribosome interact with GTP-bound translation factors. The protein is Large ribosomal subunit protein uL11 of Lactobacillus acidophilus (strain ATCC 700396 / NCK56 / N2 / NCFM).